Consider the following 319-residue polypeptide: NADH-cytochrome b5 reductase 2 (319 aa).

Residues 30 to 46 (LAPVYLTVGLAGLGVGL) form a helical membrane-spanning segment. The FAD-binding FR-type domain maps to 69–173 (QGWVDLKLSE…KGPLPKYPWE (105 aa)). Residue 176–211 (KHQHICLIAGGTGITPMYQLARHIFKNPEDKTKVTL) coordinates FAD.

Belongs to the flavoprotein pyridine nucleotide cytochrome reductase family. Requires FAD as cofactor.

Its subcellular location is the mitochondrion outer membrane. The catalysed reaction is 2 Fe(III)-[cytochrome b5] + NADH = 2 Fe(II)-[cytochrome b5] + NAD(+) + H(+). Functionally, may mediate the reduction of outer membrane cytochrome b5. The chain is NADH-cytochrome b5 reductase 2 (mcr1) from Aspergillus terreus (strain NIH 2624 / FGSC A1156).